We begin with the raw amino-acid sequence, 340 residues long: Phenylalanine--tRNA ligase alpha subunit (340 aa).

Glu254 contributes to the Mg(2+) binding site.

This sequence belongs to the class-II aminoacyl-tRNA synthetase family. Phe-tRNA synthetase alpha subunit type 1 subfamily. In terms of assembly, tetramer of two alpha and two beta subunits. Requires Mg(2+) as cofactor.

It is found in the cytoplasm. The catalysed reaction is tRNA(Phe) + L-phenylalanine + ATP = L-phenylalanyl-tRNA(Phe) + AMP + diphosphate + H(+). This chain is Phenylalanine--tRNA ligase alpha subunit, found in Caldicellulosiruptor bescii (strain ATCC BAA-1888 / DSM 6725 / KCTC 15123 / Z-1320) (Anaerocellum thermophilum).